Consider the following 176-residue polypeptide: Pectinesterase inhibitor 1 (176 aa).

A signal peptide spans 1-25; that stretch reads MAANLRNNAFLSSLMFLLLIGSSYA. 2 disulfides stabilise this stretch: cysteine 35-cysteine 44 and cysteine 98-cysteine 138. Residue asparagine 154 is glycosylated (N-linked (GlcNAc...) asparagine).

The protein belongs to the PMEI family. Monomer and homodimer. Interacts in vitro with PPME1. As to expression, highest expression in flowers. Expressed exclusively at the pollen tube tip.

It localises to the secreted. Its subcellular location is the extracellular space. The protein localises to the apoplast. In terms of biological role, inhibits pectin methylesterase (PME) from flowers and siliques. Inhibits PME from leaves. In Arabidopsis thaliana (Mouse-ear cress), this protein is Pectinesterase inhibitor 1.